The following is an 84-amino-acid chain: uncharacterized protein (84 aa).

The disordered stretch occupies residues 62–84 (GYATKKDTMRMSAQKRTTKRLKP).

This is an uncharacterized protein from Soybean chlorotic mottle virus.